Consider the following 862-residue polypeptide: Bifunctional uridylyltransferase/uridylyl-removing enzyme (862 aa).

Positions 1 to 328 (MSTAAIPTDA…FPRRAGAAIV (328 aa)) are uridylyltransferase. The interval 329-685 (INERFQAVRE…ARVSDADQGV (357 aa)) is uridylyl-removing. Positions 447-563 (VDQHIMMVLR…GRFADTVGTE (117 aa)) constitute an HD domain. ACT domains are found at residues 686–765 (QVMV…DRPS) and 794–862 (ILSL…RLHI).

Belongs to the GlnD family. The cofactor is Mg(2+).

The catalysed reaction is [protein-PII]-L-tyrosine + UTP = [protein-PII]-uridylyl-L-tyrosine + diphosphate. The enzyme catalyses [protein-PII]-uridylyl-L-tyrosine + H2O = [protein-PII]-L-tyrosine + UMP + H(+). With respect to regulation, uridylyltransferase (UTase) activity is inhibited by glutamine, while glutamine activates uridylyl-removing (UR) activity. Functionally, modifies, by uridylylation and deuridylylation, the PII regulatory proteins (GlnB and homologs), in response to the nitrogen status of the cell that GlnD senses through the glutamine level. Under low glutamine levels, catalyzes the conversion of the PII proteins and UTP to PII-UMP and PPi, while under higher glutamine levels, GlnD hydrolyzes PII-UMP to PII and UMP (deuridylylation). Thus, controls uridylylation state and activity of the PII proteins, and plays an important role in the regulation of nitrogen assimilation and metabolism. The protein is Bifunctional uridylyltransferase/uridylyl-removing enzyme of Aromatoleum aromaticum (strain DSM 19018 / LMG 30748 / EbN1) (Azoarcus sp. (strain EbN1)).